Consider the following 160-residue polypeptide: Major strawberry allergen Fra a 1-E (160 aa).

This sequence belongs to the BetVI family. In terms of assembly, monomer. Interacts with AP. As to expression, highly expressed in roots. Expressed in open flowers. Expressed at low levels in leaves, flower buds and fruits.

In terms of biological role, involved in the control of flavonoid biosynthesis in fruits, probably by binding directly to natural flavonoids. Binds the natural flavonoid quercetin-3-O-glucuronide with affinities in the low micromolar range. This chain is Major strawberry allergen Fra a 1-E, found in Fragaria ananassa (Strawberry).